Consider the following 928-residue polypeptide: ATP-dependent DNA helicase PIF5 (928 aa).

A mitochondrion-targeting transit peptide spans 1–49 (MLSRLSAVWRPSRVALRIQRVDFTTCGNRLNRSTQPNEPPLVSGIAARS). Disordered stretches follow at residues 29–141 (RLNR…DVAI) and 176–231 (LRAK…FSDA). The segment covering 52 to 61 (AKAEPVEKRG) has biased composition (basic and acidic residues). 264–271 (GGAGSGKS) contributes to the ATP binding site. 4 disordered regions span residues 389-421 (PIPPRNKPQQKTEENAEAQEGGDPTDGTPAPSK), 481-513 (KSSAKSRKKKDEDAGNDGVLPLTDAETTPAAAE), 545-572 (IYPSPNDGSSQQTGSSNGANSVTEEDTM), and 585-607 (STHETEPETTEETTTGTQPSQPW). Polar residues predominate over residues 550 to 566 (NDGSSQQTGSSNGANSV). A DNA-binding region spans residues 858-877 (QAYVALSRSTRLDNIRLLDF). The interval 898–928 (EELDNEIEDDGTEGDEEALEGDGEYEGEVEE) is disordered.

It belongs to the helicase family. PIF1 subfamily. Monomer. Requires Mg(2+) as cofactor.

The protein localises to the mitochondrion. The enzyme catalyses Couples ATP hydrolysis with the unwinding of duplex DNA at the replication fork by translocating in the 5'-3' direction. This creates two antiparallel DNA single strands (ssDNA). The leading ssDNA polymer is the template for DNA polymerase III holoenzyme which synthesizes a continuous strand.. It carries out the reaction ATP + H2O = ADP + phosphate + H(+). DNA-dependent ATPase and 5'-3' DNA helicase required for the maintenance of mitochondrial (kinetoplast) genome stability. Involved in processing of minicircle Okazaki fragments. The protein is ATP-dependent DNA helicase PIF5 of Trypanosoma brucei brucei (strain 927/4 GUTat10.1).